The sequence spans 188 residues: MTKLIYLIGPSGAGKDSLLRAIRQLSLPHLLVAHRYITRPAEIQGENHIALTPEEFAIRQQLGIFALNWQAHQCHYGIGIEIDYWLQRGSDVIVNGSRAYLTQARERYGNTLFPICLTVSESALRQRLRARGRESEQQIAMRLQRAEEEQNRLQSDCVLLNNDGDLQHTLSTFQSLLPLDRACTAHRE.

Residue 9–16 (GPSGAGKD) participates in ATP binding.

This sequence belongs to the ribose 1,5-bisphosphokinase family.

The catalysed reaction is alpha-D-ribose 1,5-bisphosphate + ATP = 5-phospho-alpha-D-ribose 1-diphosphate + ADP. The protein operates within metabolic intermediate biosynthesis; 5-phospho-alpha-D-ribose 1-diphosphate biosynthesis; 5-phospho-alpha-D-ribose 1-diphosphate from D-ribose 5-phosphate (route II): step 3/3. Its function is as follows. Catalyzes the phosphorylation of ribose 1,5-bisphosphate to 5-phospho-D-ribosyl alpha-1-diphosphate (PRPP). This chain is Ribose 1,5-bisphosphate phosphokinase PhnN, found in Pectobacterium parmentieri (strain WPP163) (Pectobacterium wasabiae (strain WPP163)).